Consider the following 392-residue polypeptide: Phosphoglycerate kinase (392 aa).

Substrate-binding positions include 21-23 (DLN), R36, 59-62 (HLGR), R113, and R146. ATP is bound by residues K197, E319, and 345 to 348 (GGDT).

The protein belongs to the phosphoglycerate kinase family. In terms of assembly, monomer.

Its subcellular location is the cytoplasm. The catalysed reaction is (2R)-3-phosphoglycerate + ATP = (2R)-3-phospho-glyceroyl phosphate + ADP. It participates in carbohydrate degradation; glycolysis; pyruvate from D-glyceraldehyde 3-phosphate: step 2/5. This chain is Phosphoglycerate kinase, found in Nitrosococcus oceani (strain ATCC 19707 / BCRC 17464 / JCM 30415 / NCIMB 11848 / C-107).